The sequence spans 225 residues: Ribosome maturation factor RimM (225 aa).

A PRC barrel domain is found at 144–225; it reads ADEFYWVDLI…RIVVDWEADY (82 aa).

It belongs to the RimM family. Binds ribosomal protein uS19.

It localises to the cytoplasm. In terms of biological role, an accessory protein needed during the final step in the assembly of 30S ribosomal subunit, possibly for assembly of the head region. Essential for efficient processing of 16S rRNA. May be needed both before and after RbfA during the maturation of 16S rRNA. It has affinity for free ribosomal 30S subunits but not for 70S ribosomes. The polypeptide is Ribosome maturation factor RimM (Burkholderia orbicola (strain AU 1054)).